The sequence spans 250 residues: Kv channel-interacting protein 4 (250 aa).

Positions N2–S44 are KIS. Phosphoserine occurs at positions 17 and 56. Positions L61 to P117 constitute an EF-hand 1; degenerate domain. EF-hand domains follow at residues D120–G155, T156–M191, and A204–I239. D133, D135, N137, D144, D169, N171, D173, Y175, E180, D217, N219, D221, and E228 together coordinate Ca(2+). The interval E237–I250 is interaction with KCND2.

It belongs to the recoverin family. Component of heteromultimeric potassium channels. Identified in potassium channel complexes containing KCND1, KCND2, KCND3, KCNIP1, KCNIP2, KCNIP3, KCNIP4, DPP6 and DPP10. Interacts with KCND2. Interacts with KCND3. Interacts with the C-terminus of PSEN2 and probably PSEN1.

Its subcellular location is the cell membrane. It is found in the cytoplasm. The protein localises to the peroxisome. In terms of biological role, regulatory subunit of Kv4/D (Shal)-type voltage-gated rapidly inactivating A-type potassium channels. Modulates KCND2 channel density, inactivation kinetics and rate of recovery from inactivation in a calcium-dependent and isoform-specific manner. Modulates KCND3/Kv4.3 currents. Isoform 4 does not increase KCND2 expression at the cell membrane. Isoform 4 retains KCND3 in the endoplasmic reticulum and negatively regulates its expression at the cell membrane. This Macaca fascicularis (Crab-eating macaque) protein is Kv channel-interacting protein 4 (KCNIP4).